The sequence spans 227 residues: Cytidylate kinase (227 aa).

Residue 12 to 20 (GPSGAGKGT) participates in ATP binding.

The protein belongs to the cytidylate kinase family. Type 1 subfamily.

It localises to the cytoplasm. It carries out the reaction CMP + ATP = CDP + ADP. The enzyme catalyses dCMP + ATP = dCDP + ADP. The protein is Cytidylate kinase of Shigella sonnei (strain Ss046).